The chain runs to 249 residues: Probable septum site-determining protein MinC (249 aa).

Residues 89-130 (SLFEPGMPPAMKGGRPAPDFEVPEVDPADPPKAGKGKAAAPI) form a disordered region. Residues 119 to 129 (PKAGKGKAAAP) show a composition bias toward low complexity.

It belongs to the MinC family. In terms of assembly, interacts with MinD and FtsZ.

In terms of biological role, cell division inhibitor that blocks the formation of polar Z ring septums. Rapidly oscillates between the poles of the cell to destabilize FtsZ filaments that have formed before they mature into polar Z rings. Prevents FtsZ polymerization. The sequence is that of Probable septum site-determining protein MinC from Rhizobium meliloti (strain 1021) (Ensifer meliloti).